Consider the following 225-residue polypeptide: Uracil-DNA glycosylase (225 aa).

Catalysis depends on Asp-65, which acts as the Proton acceptor.

This sequence belongs to the uracil-DNA glycosylase (UDG) superfamily. UNG family.

It is found in the cytoplasm. It carries out the reaction Hydrolyzes single-stranded DNA or mismatched double-stranded DNA and polynucleotides, releasing free uracil.. Its function is as follows. Excises uracil residues from the DNA which can arise as a result of misincorporation of dUMP residues by DNA polymerase or due to deamination of cytosine. This Bacillus mycoides (strain KBAB4) (Bacillus weihenstephanensis) protein is Uracil-DNA glycosylase.